Here is a 344-residue protein sequence, read N- to C-terminus: tRNA N6-adenosine threonylcarbamoyltransferase (344 aa).

The Fe cation site is built by His111 and His115. Substrate contacts are provided by residues 133–137 (VVSGG), Asp166, Gly179, Asp183, and Asn270. Position 298 (Asp298) interacts with Fe cation.

This sequence belongs to the KAE1 / TsaD family. Fe(2+) serves as cofactor.

The protein localises to the cytoplasm. The catalysed reaction is L-threonylcarbamoyladenylate + adenosine(37) in tRNA = N(6)-L-threonylcarbamoyladenosine(37) in tRNA + AMP + H(+). In terms of biological role, required for the formation of a threonylcarbamoyl group on adenosine at position 37 (t(6)A37) in tRNAs that read codons beginning with adenine. Is involved in the transfer of the threonylcarbamoyl moiety of threonylcarbamoyl-AMP (TC-AMP) to the N6 group of A37, together with TsaE and TsaB. TsaD likely plays a direct catalytic role in this reaction. In Persephonella marina (strain DSM 14350 / EX-H1), this protein is tRNA N6-adenosine threonylcarbamoyltransferase.